We begin with the raw amino-acid sequence, 350 residues long: C4-dicarboxylate-binding protein DctB (350 aa).

An N-terminal signal peptide occupies residues 1–18; it reads MKSLLACLALMIAGIATA.

It belongs to the bacterial solute-binding protein 7 family.

The protein localises to the secreted. In terms of biological role, part of the binding-protein-dependent transport system for uptake of C4-dicarboxylates. Responsible for growth on fumarate and succinate but not malate. Is not directly involved in C4-dicarboxylate uptake, but plays a sensory role in the DctS/DctR two-component system which regulates the expression of the dctA C4-dicarboxylate transporter. This is C4-dicarboxylate-binding protein DctB (dctB) from Bacillus subtilis (strain 168).